A 544-amino-acid chain; its full sequence is Ribosomal protein S6 kinase-like 1 (544 aa).

In terms of domain architecture, MIT spans 87–115 (VHVDPNKERREAVKLKITKYLRRAEEIFN). Residues 145-534 (SALEQLKGCR…TSRLKSHPFF (390 aa)) enclose the Protein kinase domain. ATP is bound by residues 151–159 (KGCRVVGII) and Lys-177. 2 disordered regions span residues 262–344 (PAEL…HWVR) and 353–372 (AYGR…SLGS). Over residues 303–313 (SRPSAVFSSDP) the composition is skewed to polar residues. Asp-407 acts as the Proton acceptor in catalysis.

This sequence belongs to the protein kinase superfamily. Ser/Thr protein kinase family. S6 kinase subfamily.

The enzyme catalyses L-seryl-[protein] + ATP = O-phospho-L-seryl-[protein] + ADP + H(+). It carries out the reaction L-threonyl-[protein] + ATP = O-phospho-L-threonyl-[protein] + ADP + H(+). The chain is Ribosomal protein S6 kinase-like 1 (Rps6kl1) from Mus musculus (Mouse).